The chain runs to 167 residues: Small ribosomal subunit protein uS5 (167 aa).

Residues 12-75 (LQEKLIAVNR…EKARRNIVTV (64 aa)) enclose the S5 DRBM domain.

The protein belongs to the universal ribosomal protein uS5 family. In terms of assembly, part of the 30S ribosomal subunit. Contacts proteins S4 and S8.

In terms of biological role, with S4 and S12 plays an important role in translational accuracy. Its function is as follows. Located at the back of the 30S subunit body where it stabilizes the conformation of the head with respect to the body. This chain is Small ribosomal subunit protein uS5, found in Shewanella baltica (strain OS223).